Consider the following 208-residue polypeptide: Small ribosomal subunit protein uS4 (208 aa).

The 64-residue stretch at 98–161 folds into the S4 RNA-binding domain; it reads QRLDNLVYRM…KNNPQILRAV (64 aa).

The protein belongs to the universal ribosomal protein uS4 family. As to quaternary structure, part of the 30S ribosomal subunit. Contacts protein S5. The interaction surface between S4 and S5 is involved in control of translational fidelity.

Its function is as follows. One of the primary rRNA binding proteins, it binds directly to 16S rRNA where it nucleates assembly of the body of the 30S subunit. With S5 and S12 plays an important role in translational accuracy. The polypeptide is Small ribosomal subunit protein uS4 (Campylobacter hominis (strain ATCC BAA-381 / DSM 21671 / CCUG 45161 / LMG 19568 / NCTC 13146 / CH001A)).